Here is a 130-residue protein sequence, read N- to C-terminus: Small ribosomal subunit protein uS9 (130 aa).

The disordered stretch occupies residues 105-130 (TRDSRMKERKKPGLRGARRAPQFSKR). Over residues 111-130 (KERKKPGLRGARRAPQFSKR) the composition is skewed to basic residues.

This sequence belongs to the universal ribosomal protein uS9 family.

In Lysinibacillus sphaericus (strain C3-41), this protein is Small ribosomal subunit protein uS9.